A 660-amino-acid chain; its full sequence is Polycomb protein SCMH1 (660 aa).

MBT repeat units follow at residues 28–126 (FTWD…LQPP) and 134–235 (SSWP…LQPP). The tract at residues 233–345 (QPPGTKVVIP…EPDTSTVPQD (113 aa)) is disordered. 2 stretches are compositionally biased toward basic residues: residues 273–284 (RGRKPGKKRGRT) and 305–320 (FPKK…RKPR). Low complexity predominate over residues 330 to 343 (PTTSTPEPDTSTVP). Residues 593 to 658 (WTVEDVMQFV…SYHIDRLKQG (66 aa)) enclose the SAM domain.

This sequence belongs to the SCM family. Interacts with the SAM domain of PHC1 via its SAM domain in vitro. Associates with a PRC1-like complex. Strongly expressed in heart, muscle and pancreas. Weakly expressed in brain, placenta, lung, liver and kidney.

Its subcellular location is the nucleus. Associates with Polycomb group (PcG) multiprotein complexes; the complex class is required to maintain the transcriptionally repressive state of some genes. This Homo sapiens (Human) protein is Polycomb protein SCMH1.